The following is a 78-amino-acid chain: U5-ctenitoxin-Pk1a (78 aa).

Disulfide bonds link cysteine 6/cysteine 23, cysteine 13/cysteine 29, cysteine 20/cysteine 52, cysteine 22/cysteine 40, cysteine 31/cysteine 38, cysteine 58/cysteine 73, and cysteine 69/cysteine 77.

As to expression, expressed by the venom gland.

It localises to the secreted. Lethal neurotoxin. Causes spastic paralysis and death in mice in 4-6 minutes after intracerebroventricular injection at dose levels of 1.5 ug per mouse. The polypeptide is U5-ctenitoxin-Pk1a (Phoneutria keyserlingi (Brazilian wandering spider)).